The sequence spans 67 residues: Large ribosomal subunit protein uL29 (67 aa).

Belongs to the universal ribosomal protein uL29 family.

This chain is Large ribosomal subunit protein uL29, found in Staphylothermus marinus (strain ATCC 43588 / DSM 3639 / JCM 9404 / F1).